A 420-amino-acid polypeptide reads, in one-letter code: Bone morphogenetic protein 2 (420 aa).

The signal sequence occupies residues methionine 1–glycine 23. Residues leucine 24–arginine 303 constitute a propeptide that is removed on maturation. N-linked (GlcNAc...) asparagine glycosylation is found at asparagine 138, asparagine 167, asparagine 168, asparagine 172, and asparagine 362. Disulfide bonds link cysteine 320–cysteine 385, cysteine 349–cysteine 417, and cysteine 353–cysteine 419.

This sequence belongs to the TGF-beta family. As to quaternary structure, homodimer; disulfide-linked.

The protein localises to the secreted. Its function is as follows. Induces cartilage and bone formation. The chain is Bone morphogenetic protein 2 (bmp2) from Tetraodon nigroviridis (Spotted green pufferfish).